Here is a 321-residue protein sequence, read N- to C-terminus: Lipoyl synthase (321 aa).

7 residues coordinate [4Fe-4S] cluster: C68, C73, C79, C94, C98, C101, and S308. Residues 80 to 297 form the Radical SAM core domain; sequence FNHGTATFMI…RVFAEEIGFT (218 aa).

It belongs to the radical SAM superfamily. Lipoyl synthase family. Requires [4Fe-4S] cluster as cofactor.

It is found in the cytoplasm. It carries out the reaction [[Fe-S] cluster scaffold protein carrying a second [4Fe-4S](2+) cluster] + N(6)-octanoyl-L-lysyl-[protein] + 2 oxidized [2Fe-2S]-[ferredoxin] + 2 S-adenosyl-L-methionine + 4 H(+) = [[Fe-S] cluster scaffold protein] + N(6)-[(R)-dihydrolipoyl]-L-lysyl-[protein] + 4 Fe(3+) + 2 hydrogen sulfide + 2 5'-deoxyadenosine + 2 L-methionine + 2 reduced [2Fe-2S]-[ferredoxin]. It functions in the pathway protein modification; protein lipoylation via endogenous pathway; protein N(6)-(lipoyl)lysine from octanoyl-[acyl-carrier-protein]: step 2/2. Functionally, catalyzes the radical-mediated insertion of two sulfur atoms into the C-6 and C-8 positions of the octanoyl moiety bound to the lipoyl domains of lipoate-dependent enzymes, thereby converting the octanoylated domains into lipoylated derivatives. This chain is Lipoyl synthase, found in Shewanella woodyi (strain ATCC 51908 / MS32).